Here is a 31-residue protein sequence, read N- to C-terminus: Photosystem II reaction center protein T (31 aa).

Residues 3–23 traverse the membrane as a helical segment; sequence AFTYTLLMTLGVVTLFFAVAF.

The protein belongs to the PsbT family. PSII is composed of 1 copy each of membrane proteins PsbA, PsbB, PsbC, PsbD, PsbE, PsbF, PsbH, PsbI, PsbJ, PsbK, PsbL, PsbM, PsbT, PsbX, PsbY, Psb30/Ycf12, peripheral proteins PsbO, CyanoQ (PsbQ), PsbU, PsbV and a large number of cofactors. It forms dimeric complexes.

The protein localises to the cellular thylakoid membrane. Found at the monomer-monomer interface of the photosystem II (PS II) dimer, plays a role in assembly and dimerization of PSII. PSII is a light-driven water plastoquinone oxidoreductase, using light energy to abstract electrons from H(2)O, generating a proton gradient subsequently used for ATP formation. The protein is Photosystem II reaction center protein T of Prochlorococcus marinus (strain SARG / CCMP1375 / SS120).